The primary structure comprises 194 residues: dTTP/UTP pyrophosphatase (194 aa).

D73 (proton acceptor) is an active-site residue.

It belongs to the Maf family. YhdE subfamily. A divalent metal cation is required as a cofactor.

The protein localises to the cytoplasm. It catalyses the reaction dTTP + H2O = dTMP + diphosphate + H(+). The enzyme catalyses UTP + H2O = UMP + diphosphate + H(+). Functionally, nucleoside triphosphate pyrophosphatase that hydrolyzes dTTP and UTP. May have a dual role in cell division arrest and in preventing the incorporation of modified nucleotides into cellular nucleic acids. The sequence is that of dTTP/UTP pyrophosphatase from Clostridium botulinum (strain Kyoto / Type A2).